Here is a 341-residue protein sequence, read N- to C-terminus: 4-hydroxy-2-oxovalerate aldolase (341 aa).

Residues 9 to 259 enclose the Pyruvate carboxyltransferase domain; sequence VRITEVCLRD…KLDIDLYKMM (251 aa). Residue 17 to 18 participates in substrate binding; sequence RD. Asp18 provides a ligand contact to Mn(2+). His21 serves as the catalytic Proton acceptor. Residues Ser171 and His198 each coordinate substrate. Mn(2+) is bound by residues His198 and His200. Tyr289 provides a ligand contact to substrate.

It belongs to the 4-hydroxy-2-oxovalerate aldolase family.

The catalysed reaction is (S)-4-hydroxy-2-oxopentanoate = acetaldehyde + pyruvate. The chain is 4-hydroxy-2-oxovalerate aldolase from Bacillus thuringiensis (strain Al Hakam).